Consider the following 248-residue polypeptide: NH(3)-dependent NAD(+) synthetase (248 aa).

30–37 (GLSGGIDS) contributes to the ATP binding site. Asp36 provides a ligand contact to Mg(2+). Deamido-NAD(+) is bound at residue Arg114. Thr134 is a binding site for ATP. Glu139 is a binding site for Mg(2+). Positions 147 and 154 each coordinate deamido-NAD(+). ATP contacts are provided by Lys163 and Thr185. Deamido-NAD(+) is bound at residue 232–233 (HK).

Belongs to the NAD synthetase family. Homodimer.

The enzyme catalyses deamido-NAD(+) + NH4(+) + ATP = AMP + diphosphate + NAD(+) + H(+). The protein operates within cofactor biosynthesis; NAD(+) biosynthesis; NAD(+) from deamido-NAD(+) (ammonia route): step 1/1. Catalyzes the ATP-dependent amidation of deamido-NAD to form NAD. Uses ammonia as a nitrogen source. This chain is NH(3)-dependent NAD(+) synthetase, found in Mycoplasma genitalium (strain ATCC 33530 / DSM 19775 / NCTC 10195 / G37) (Mycoplasmoides genitalium).